A 356-amino-acid polypeptide reads, in one-letter code: Holliday junction branch migration complex subunit RuvB (356 aa).

The segment at 4–190 (TDKLAAERII…FGIVARLEFY (187 aa)) is large ATPase domain (RuvB-L). ATP contacts are provided by residues leucine 29, arginine 30, glycine 71, lysine 74, threonine 75, threonine 76, 137-139 (EDY), arginine 180, tyrosine 190, and arginine 227. Residue threonine 75 participates in Mg(2+) binding. Residues 191-261 (DAEQLSRIVR…VADAALAMLD (71 aa)) form a small ATPAse domain (RuvB-S) region. A head domain (RuvB-H) region spans residues 264-356 (PVGFDLMDRK…NLWDTPDAEC (93 aa)). DNA-binding residues include arginine 300, arginine 319, and arginine 324.

This sequence belongs to the RuvB family. In terms of assembly, homohexamer. Forms an RuvA(8)-RuvB(12)-Holliday junction (HJ) complex. HJ DNA is sandwiched between 2 RuvA tetramers; dsDNA enters through RuvA and exits via RuvB. An RuvB hexamer assembles on each DNA strand where it exits the tetramer. Each RuvB hexamer is contacted by two RuvA subunits (via domain III) on 2 adjacent RuvB subunits; this complex drives branch migration. In the full resolvosome a probable DNA-RuvA(4)-RuvB(12)-RuvC(2) complex forms which resolves the HJ.

It is found in the cytoplasm. It catalyses the reaction ATP + H2O = ADP + phosphate + H(+). Functionally, the RuvA-RuvB-RuvC complex processes Holliday junction (HJ) DNA during genetic recombination and DNA repair, while the RuvA-RuvB complex plays an important role in the rescue of blocked DNA replication forks via replication fork reversal (RFR). RuvA specifically binds to HJ cruciform DNA, conferring on it an open structure. The RuvB hexamer acts as an ATP-dependent pump, pulling dsDNA into and through the RuvAB complex. RuvB forms 2 homohexamers on either side of HJ DNA bound by 1 or 2 RuvA tetramers; 4 subunits per hexamer contact DNA at a time. Coordinated motions by a converter formed by DNA-disengaged RuvB subunits stimulates ATP hydrolysis and nucleotide exchange. Immobilization of the converter enables RuvB to convert the ATP-contained energy into a lever motion, pulling 2 nucleotides of DNA out of the RuvA tetramer per ATP hydrolyzed, thus driving DNA branch migration. The RuvB motors rotate together with the DNA substrate, which together with the progressing nucleotide cycle form the mechanistic basis for DNA recombination by continuous HJ branch migration. Branch migration allows RuvC to scan DNA until it finds its consensus sequence, where it cleaves and resolves cruciform DNA. This chain is Holliday junction branch migration complex subunit RuvB, found in Burkholderia pseudomallei (strain 668).